The following is a 380-amino-acid chain: Tryptophan 2,3-dioxygenase (380 aa).

Residues 57-61 and arginine 128 each bind substrate; that span reads FIITH. A heme-binding site is contributed by histidine 313. Residue threonine 328 participates in substrate binding.

Belongs to the tryptophan 2,3-dioxygenase family. Homotetramer. Dimer of dimers. The cofactor is heme.

It catalyses the reaction L-tryptophan + O2 = N-formyl-L-kynurenine. It participates in amino-acid degradation; L-tryptophan degradation via kynurenine pathway; L-kynurenine from L-tryptophan: step 1/2. The protein operates within pigment biosynthesis; ommochrome biosynthesis. In terms of biological role, heme-dependent dioxygenase that catalyzes the oxidative cleavage of the L-tryptophan (L-Trp) pyrrole ring and converts L-tryptophan to N-formyl-L-kynurenine. Catalyzes the oxidative cleavage of the indole moiety. This Drosophila virilis (Fruit fly) protein is Tryptophan 2,3-dioxygenase.